The following is a 100-amino-acid chain: Small ribosomal subunit protein uS14c (100 aa).

The protein belongs to the universal ribosomal protein uS14 family. As to quaternary structure, part of the 30S ribosomal subunit.

It is found in the plastid. Its subcellular location is the chloroplast. Its function is as follows. Binds 16S rRNA, required for the assembly of 30S particles. The chain is Small ribosomal subunit protein uS14c from Anthoceros angustus (Hornwort).